Reading from the N-terminus, the 404-residue chain is High affinity immunoglobulin gamma Fc receptor I (404 aa).

The N-terminal stretch at 1-24 (MILTSFGDDMWLLTTLLLWVPVGG) is a signal peptide. The Extracellular segment spans residues 25-297 (EVVNATKAVI…QVLGPQSSAP (273 aa)). N28, N48, N69, N168, and N249 each carry an N-linked (GlcNAc...) asparagine glycan. 3 Ig-like C2-type domains span residues 32-111 (AVIT…LQIH), 117-194 (LQAS…SITV), and 201-286 (PVLR…PELE). 3 disulfides stabilise this stretch: C53–C95, C134–C177, and C221–C269. The chain crosses the membrane as a helical span at residues 298–320 (VWFHILFYLSVGIMFSLNTVLYV). The interval 321 to 342 (KIHRLQREKKYNLEVPLVSEQG) is interaction with EPB41L2. Residues 321–404 (KIHRLQREKK…DSTGAQTSQS (84 aa)) are Cytoplasmic-facing. Residues 346–404 (NSFQQVRSDGVYEEVTATASQTTPKEAPDGPRSSVGDCGPEQPEPLPPSDSTGAQTSQS) form a disordered region. Position 347 is a phosphoserine (S347). T368 carries the phosphothreonine modification. The segment covering 394–404 (SDSTGAQTSQS) has biased composition (polar residues).

Belongs to the immunoglobulin superfamily. FCGR1 family. Interacts with FCERG1; forms a functional signaling complex. Interacts with FLNA; prevents FCGR1A degradation. Interacts with EPB41L2, LAT and PPL. Interacts with HCK and LYN. In terms of processing, N-glycosylated. Phosphorylated on serine residues. As to expression, macrophage-specific.

It localises to the cell membrane. Its function is as follows. High affinity receptor for the Fc region of immunoglobulins gamma. Functions in both innate and adaptive immune responses. This chain is High affinity immunoglobulin gamma Fc receptor I (Fcgr1), found in Mus musculus (Mouse).